The following is a 250-amino-acid chain: HTH-type transcriptional regulator KipR (250 aa).

The HTH iclR-type domain occupies 5-65; it reads NKTVVKSMAL…DASGAYSLGL (61 aa). The H-T-H motif DNA-binding region spans 26 to 45; it reads LSELVSLTGMPKTSVHRMVS. In terms of domain architecture, IclR-ED spans 80 to 249; it reads IRKIAKPVME…ALQISRKIGY (170 aa).

Functionally, transcriptional repressor of the kip gene-containing operon. The sequence is that of HTH-type transcriptional regulator KipR (kipR) from Bacillus subtilis (strain 168).